The following is a 547-amino-acid chain: uncharacterized protein (547 aa).

A compositionally biased stretch (polar residues) spans 1–18 (MEYHPSSQSPQVNPGMES). 2 disordered regions span residues 1 to 41 (MEYH…LQHP) and 80 to 165 (PSYP…VKRQ). Low complexity-rich tracts occupy residues 19 to 29 (QQGGYTYTYQQ) and 83 to 94 (PQSSSAPSNNSY). Positions 121–135 (VPSPSPIEMVPPSPP) are enriched in pro residues. The span at 136 to 160 (KTGSNNSAPVTGKTVQSGNALNNSG) shows a compositional bias: polar residues. The zn(2)-C6 fungal-type DNA-binding region spans 174–201 (CLTCRKRRIKCDERKPICYNCIKSKRQC).

The protein localises to the nucleus. This is an uncharacterized protein from Schizosaccharomyces pombe (strain 972 / ATCC 24843) (Fission yeast).